Consider the following 931-residue polypeptide: G patch domain-containing protein 1 (931 aa).

The segment covering 1–12 has biased composition (acidic residues); that stretch reads MAALDSDSDEDL. 3 disordered regions span residues 1 to 41, 72 to 92, and 169 to 213; these read MAAL…TVRD, TPSSFVSSRQNRADKSVLGPE, and QGIG…YLPE. Alanine 2 is subject to N-acetylalanine. Phosphoserine is present on residues serine 6 and serine 8. The span at 72-81 shows a compositional bias: polar residues; the sequence is TPSSFVSSRQ. Residues 152-198 form the G-patch domain; it reads KLSVGFELLRKMGWKEGQGIGPRVKRRPRRQKPDPGVKIYGCALPPG. The span at 202-211 shows a compositional bias: acidic residues; that stretch reads GSEDEDDDYL. A Glycyl lysine isopeptide (Lys-Gly) (interchain with G-Cter in SUMO2) cross-link involves residue lysine 313. Residues serine 358 and serine 479 each carry the phosphoserine modification. Disordered stretches follow at residues 567-594 and 659-931; these read SRFTHAQEEDDSEQVEVPRDQENDVSDK and SPVT…LRRQ. Residues 582–593 are compositionally biased toward basic and acidic residues; it reads EVPRDQENDVSD. A compositionally biased stretch (polar residues) spans 659-668; the sequence is SPVTQASSEK. Residues 669–695 are compositionally biased toward basic and acidic residues; it reads VAQHRASDKSRKPSRWDTSKEEKKEDS. The residue at position 715 (serine 715) is a Phosphoserine. Over residues 769–780 the composition is skewed to acidic residues; it reads SEDEQGDSEDDQ. Positions 781–792 are enriched in basic and acidic residues; sequence EGTREADFKSSQ. The span at 852–888 shows a compositional bias: basic residues; that stretch reads EKHKKNKEKHKTKKEHRRKKEKKKKHRKHKHKGKQKN. Residues 896 to 905 show a composition bias toward low complexity; sequence SSESTDSSDS. Basic residues predominate over residues 922–931; that stretch reads RLKRLPLRRQ.

It belongs to the GPATCH1 family.

The sequence is that of G patch domain-containing protein 1 (GPATCH1) from Bos taurus (Bovine).